The sequence spans 182 residues: uncharacterized protein (182 aa).

The Nudix hydrolase domain occupies 36–164 (LRHRATYIVV…TPDSLKALSL (129 aa)). The Nudix box motif lies at 73–95 (GGVVQSGENYLESARREAEEELG). Mg(2+)-binding residues include Glu89 and Glu93.

The protein belongs to the Nudix hydrolase family. It depends on Mg(2+) as a cofactor.

This is an uncharacterized protein from Yersinia pestis.